The sequence spans 486 residues: Photosystem II CP43 reaction center protein (486 aa).

A propeptide spanning residues 1–28 (MKVFVHGWQHKISHTRILYSLRRFYHVE) is cleaved from the precursor. The next 5 helical transmembrane spans lie at 82–106 (LFEVAHFIPEKPLYEQGFILIPHLA), 147–168 (LIGPDTLEESFPFFGYDWRDKN), 191–213 (KALFFGGVYDTWAPGGGDVRLIN), 268–288 (KPFAWARRAFVWSGEAYLSYS), and 304–325 (WYNNTAYPSEFYGPTGPEASQA). [CaMn4O5] cluster is bound at residue E380. Residues 460-484 (RARAAAAGFEKGINRENEAVLSMRP) form a helical membrane-spanning segment.

Belongs to the PsbB/PsbC family. PsbC subfamily. As to quaternary structure, PSII is composed of 1 copy each of membrane proteins PsbA, PsbB, PsbC, PsbD, PsbE, PsbF, PsbH, PsbI, PsbJ, PsbK, PsbL, PsbM, PsbT, PsbX, PsbY, PsbZ, Psb30/Ycf12, at least 3 peripheral proteins of the oxygen-evolving complex and a large number of cofactors. It forms dimeric complexes. Binds multiple chlorophylls and provides some of the ligands for the Ca-4Mn-5O cluster of the oxygen-evolving complex. It may also provide a ligand for a Cl- that is required for oxygen evolution. PSII binds additional chlorophylls, carotenoids and specific lipids. is required as a cofactor.

Its subcellular location is the plastid. It is found in the chloroplast thylakoid membrane. In terms of biological role, one of the components of the core complex of photosystem II (PSII). It binds chlorophyll and helps catalyze the primary light-induced photochemical processes of PSII. PSII is a light-driven water:plastoquinone oxidoreductase, using light energy to abstract electrons from H(2)O, generating O(2) and a proton gradient subsequently used for ATP formation. In Gracilaria tenuistipitata var. liui (Red alga), this protein is Photosystem II CP43 reaction center protein.